The sequence spans 273 residues: NAD-dependent protein deacylase (273 aa).

The Deacetylase sirtuin-type domain occupies R20–G272. NAD(+) is bound at residue G48–W67. 2 residues coordinate substrate: Y92 and R95. Residue Q129–D132 participates in NAD(+) binding. Residue H147 is the Proton acceptor of the active site. Zn(2+)-binding residues include C155 and C174. NAD(+)-binding positions include G214–S216, N240–E242, and A258.

Belongs to the sirtuin family. Class III subfamily. The cofactor is Zn(2+).

The protein resides in the cytoplasm. The catalysed reaction is N(6)-acetyl-L-lysyl-[protein] + NAD(+) + H2O = 2''-O-acetyl-ADP-D-ribose + nicotinamide + L-lysyl-[protein]. The enzyme catalyses N(6)-succinyl-L-lysyl-[protein] + NAD(+) + H2O = 2''-O-succinyl-ADP-D-ribose + nicotinamide + L-lysyl-[protein]. It catalyses the reaction N(6)-(2-hydroxyisobutanoyl)-L-lysyl-[protein] + NAD(+) + H2O = 2''-O-(2-hydroxyisobutanoyl)-ADP-D-ribose + nicotinamide + L-lysyl-[protein]. Functionally, NAD-dependent lysine deacetylase that specifically removes acetyl groups on target proteins. Also acts as a protein-lysine deacylase by mediating protein desuccinylation and de-2-hydroxyisobutyrylation. Modulates the activities of several proteins which are inactive in their acylated form. This Escherichia coli O157:H7 protein is NAD-dependent protein deacylase.